Here is a 478-residue protein sequence, read N- to C-terminus: Growth/differentiation factor 10 (478 aa).

The first 33 residues, 1–33 (MAHVPARTSPGPGPQLLLLLLPLFLLLLRDVAG), serve as a signal peptide directing secretion. A propeptide spanning residues 34–368 (SHRAPAWSAL…EKTMQKARRK (335 aa)) is cleaved from the precursor. N-linked (GlcNAc...) asparagine glycosylation is found at Asn-118, Asn-156, and Asn-281. The disordered stretch occupies residues 266–319 (YDPFPAGDPEPRAAPNNSADPRVRRAAQATGPLQDNELPGLDERPPRAHAQHFH). 3 disulfide bridges follow: Cys-376–Cys-443, Cys-405–Cys-475, and Cys-409–Cys-477. The N-linked (GlcNAc...) asparagine glycan is linked to Asn-469.

This sequence belongs to the TGF-beta family. As to quaternary structure, homodimer or heterodimer. Can form a non-covalent complex of the mature region and the pro-region. As to expression, expressed in femur, brain, lung, skeletal muscle, pancreas and testis.

Its subcellular location is the secreted. In terms of biological role, growth factor involved in osteogenesis and adipogenesis. Plays an inhibitory role in the process of osteoblast differentiation via SMAD2/3 pathway. Plays an inhibitory role in the process of adipogenesis. This is Growth/differentiation factor 10 from Homo sapiens (Human).